We begin with the raw amino-acid sequence, 356 residues long: UDP-N-acetylglucosamine--N-acetylmuramyl-(pentapeptide) pyrophosphoryl-undecaprenol N-acetylglucosamine transferase (356 aa).

Residues 12 to 14 (TGG), Asn124, Arg163, Ser188, Ile242, 261 to 266 (ALTVSE), and Gln287 each bind UDP-N-acetyl-alpha-D-glucosamine.

Belongs to the glycosyltransferase 28 family. MurG subfamily.

Its subcellular location is the cell inner membrane. The enzyme catalyses di-trans,octa-cis-undecaprenyl diphospho-N-acetyl-alpha-D-muramoyl-L-alanyl-D-glutamyl-meso-2,6-diaminopimeloyl-D-alanyl-D-alanine + UDP-N-acetyl-alpha-D-glucosamine = di-trans,octa-cis-undecaprenyl diphospho-[N-acetyl-alpha-D-glucosaminyl-(1-&gt;4)]-N-acetyl-alpha-D-muramoyl-L-alanyl-D-glutamyl-meso-2,6-diaminopimeloyl-D-alanyl-D-alanine + UDP + H(+). Its pathway is cell wall biogenesis; peptidoglycan biosynthesis. Functionally, cell wall formation. Catalyzes the transfer of a GlcNAc subunit on undecaprenyl-pyrophosphoryl-MurNAc-pentapeptide (lipid intermediate I) to form undecaprenyl-pyrophosphoryl-MurNAc-(pentapeptide)GlcNAc (lipid intermediate II). This chain is UDP-N-acetylglucosamine--N-acetylmuramyl-(pentapeptide) pyrophosphoryl-undecaprenol N-acetylglucosamine transferase, found in Pseudomonas fluorescens (strain SBW25).